The following is a 187-amino-acid chain: Elongation factor P (187 aa).

The protein belongs to the elongation factor P family.

Its subcellular location is the cytoplasm. The protein operates within protein biosynthesis; polypeptide chain elongation. Its function is as follows. Involved in peptide bond synthesis. Stimulates efficient translation and peptide-bond synthesis on native or reconstituted 70S ribosomes in vitro. Probably functions indirectly by altering the affinity of the ribosome for aminoacyl-tRNA, thus increasing their reactivity as acceptors for peptidyl transferase. In Mycoplasmopsis pulmonis (strain UAB CTIP) (Mycoplasma pulmonis), this protein is Elongation factor P.